A 265-amino-acid polypeptide reads, in one-letter code: Anamorsin homolog (265 aa).

The N-terminal SAM-like domain stretch occupies residues 1 to 147 (MDAAKMYGAV…WKIGSSFALK (147 aa)). Residues 147–176 (KKVVKSSPKVQIDFDSDLIDENSLLSEEDL) form a linker region. [2Fe-2S] cluster-binding residues include C186, C195, C198, and C200. The tract at residues 186–200 (CEIGPTRKACKNCSC) is fe-S binding site A. Positions 226, 229, 237, and 240 each coordinate [4Fe-4S] cluster. 2 short sequence motifs (cx2C motif) span residues 226–229 (CGSC) and 237–240 (CSTC). The tract at residues 226–240 (CGSCGLGDAFRCSTC) is fe-S binding site B.

It belongs to the anamorsin family. Monomer. The cofactor is [2Fe-2S] cluster. Requires [4Fe-4S] cluster as cofactor.

The protein resides in the cytoplasm. Its subcellular location is the mitochondrion intermembrane space. Its function is as follows. Component of the cytosolic iron-sulfur (Fe-S) protein assembly (CIA) machinery. Required for the maturation of extramitochondrial Fe-S proteins. Part of an electron transfer chain functioning in an early step of cytosolic Fe-S biogenesis, facilitating the de novo assembly of a [4Fe-4S] cluster on the cytosolic Fe-S scaffold complex. Electrons are transferred from NADPH via a FAD- and FMN-containing diflavin oxidoreductase. Together with the diflavin oxidoreductase, also required for the assembly of the diferric tyrosyl radical cofactor of ribonucleotide reductase (RNR), probably by providing electrons for reduction during radical cofactor maturation in the catalytic small subunit. This is Anamorsin homolog from Medicago truncatula (Barrel medic).